A 381-amino-acid chain; its full sequence is Probable peptidoglycan glycosyltransferase FtsW (381 aa).

Helical transmembrane passes span 16-36, 56-76, 80-100, 145-165, 168-188, 191-211, 274-294, 312-332, and 343-363; these read LVLL…VYSA, LIFA…DYQL, WAVP…IPGI, LLSA…GLLL, PDMG…FAAG, LIFI…LVVH, VIGE…FFIL, FLAL…MAVV, and LPFL…VGIL.

This sequence belongs to the SEDS family. FtsW subfamily.

The protein localises to the cell inner membrane. The catalysed reaction is [GlcNAc-(1-&gt;4)-Mur2Ac(oyl-L-Ala-gamma-D-Glu-L-Lys-D-Ala-D-Ala)](n)-di-trans,octa-cis-undecaprenyl diphosphate + beta-D-GlcNAc-(1-&gt;4)-Mur2Ac(oyl-L-Ala-gamma-D-Glu-L-Lys-D-Ala-D-Ala)-di-trans,octa-cis-undecaprenyl diphosphate = [GlcNAc-(1-&gt;4)-Mur2Ac(oyl-L-Ala-gamma-D-Glu-L-Lys-D-Ala-D-Ala)](n+1)-di-trans,octa-cis-undecaprenyl diphosphate + di-trans,octa-cis-undecaprenyl diphosphate + H(+). The protein operates within cell wall biogenesis; peptidoglycan biosynthesis. Functionally, peptidoglycan polymerase that is essential for cell division. The chain is Probable peptidoglycan glycosyltransferase FtsW from Trichlorobacter lovleyi (strain ATCC BAA-1151 / DSM 17278 / SZ) (Geobacter lovleyi).